The following is a 511-amino-acid chain: MVLKKFLKEIQSILPGISAKLTWTSEEGSYSQDMTGVTPFQMIFEVDEKPRTLMTDCLVIKHFLRKIIMVHPKVRFHFSVKVNGILSTEIFGVENEPTLNLGNGIALLVDSQHYVSRPNFGTIESHCSRIHPVLGHPVMLFIPEDVAGMDLLGELILTPAAALCPSPKVSSNQLNRISSVSIFLYGPLGLPLILSTWEQPMTTFFKDTSSLVDWKKYHLCMIPNLDLNLDRDLVLPDVSYQVESSEEDQSQTMDPQGQTLLLFLFVDFHSAFPVQQMEIWGVYTLLTTHLNAILVESHSVVQGSIQFTVDKVLEQHHQAAKAQQKLQASLSVAVNSIMSILTGSTRSSFRKMCLQTLQAADTQEFRTKLHKVFREITQHQFLHHCSCEVKQLTLEKKDSAQGTEDAPDNSSLELLADTSGQAENKRLKRGSPRIEEMRALRSARAPSPSEAAPRRPEATAAPLTPRGREHREAHGRALAPGRASLGSRLEDVLWLQEVSNLSEWLSPSPGP.

The disordered stretch occupies residues 398 to 485; that stretch reads DSAQGTEDAP…RALAPGRASL (88 aa). The segment covering 408-422 has biased composition (polar residues); the sequence is DNSSLELLADTSGQA. Over residues 440-451 the composition is skewed to low complexity; sequence LRSARAPSPSEA. Positions 466-475 are enriched in basic and acidic residues; it reads RGREHREAHG.

The protein belongs to the TOP6B-like family. Heterotetramer of SPO11 and 2 TOP6BL chains. Interacts with SPO11. In terms of tissue distribution, detected in lung, spleen,colon and in skeletal muscle. Expressed in the ovaries, Fallopian tubes and uterus.

The protein localises to the chromosome. Component of a topoisomerase 6 complex specifically required for meiotic recombination. Together with SPO11, mediates DNA cleavage that forms the double-strand breaks (DSB) that initiate meiotic recombination. The complex promotes relaxation of negative and positive supercoiled DNA and DNA decatenation through cleavage and ligation cycles. The chain is Type 2 DNA topoisomerase 6 subunit B-like from Homo sapiens (Human).